Consider the following 418-residue polypeptide: Pestheic acid cluster transcriptional regulator 1 (418 aa).

Positions 244 to 272 are disordered; that stretch reads GTAVTTTATTSSSFISKSSEEPSPKRIKP. Over residues 245-260 the composition is skewed to low complexity; sequence TAVTTTATTSSSFISK.

The protein resides in the nucleus. In terms of biological role, transcription factor that, with ptaR2 and ptaR3, coregulates the expression of the gene cluster that mediates the biosynthesis of pestheic acid, a diphenyl ether which is a biosynthetic precursor of the unique chloropupukeananes. The polypeptide is Pestheic acid cluster transcriptional regulator 1 (Pestalotiopsis fici (strain W106-1 / CGMCC3.15140)).